The sequence spans 273 residues: Putative pyruvate, phosphate dikinase regulatory protein 2 (273 aa).

151–158 (GVSRTSKT) is an ADP binding site.

This sequence belongs to the pyruvate, phosphate/water dikinase regulatory protein family. PDRP subfamily.

It catalyses the reaction N(tele)-phospho-L-histidyl/L-threonyl-[pyruvate, phosphate dikinase] + ADP = N(tele)-phospho-L-histidyl/O-phospho-L-threonyl-[pyruvate, phosphate dikinase] + AMP + H(+). The catalysed reaction is N(tele)-phospho-L-histidyl/O-phospho-L-threonyl-[pyruvate, phosphate dikinase] + phosphate + H(+) = N(tele)-phospho-L-histidyl/L-threonyl-[pyruvate, phosphate dikinase] + diphosphate. Its function is as follows. Bifunctional serine/threonine kinase and phosphorylase involved in the regulation of the pyruvate, phosphate dikinase (PPDK) by catalyzing its phosphorylation/dephosphorylation. This is Putative pyruvate, phosphate dikinase regulatory protein 2 from Syntrophomonas wolfei subsp. wolfei (strain DSM 2245B / Goettingen).